The chain runs to 209 residues: High frequency lysogenization protein HflD homolog (209 aa).

It belongs to the HflD family.

Its subcellular location is the cytoplasm. It localises to the cell inner membrane. The polypeptide is High frequency lysogenization protein HflD homolog (Saccharophagus degradans (strain 2-40 / ATCC 43961 / DSM 17024)).